Here is a 124-residue protein sequence, read N- to C-terminus: Holo-[acyl-carrier-protein] synthase (124 aa).

Residues Asp-7 and Glu-55 each contribute to the Mg(2+) site.

It belongs to the P-Pant transferase superfamily. AcpS family. It depends on Mg(2+) as a cofactor.

The protein resides in the cytoplasm. The enzyme catalyses apo-[ACP] + CoA = holo-[ACP] + adenosine 3',5'-bisphosphate + H(+). In terms of biological role, transfers the 4'-phosphopantetheine moiety from coenzyme A to a Ser of acyl-carrier-protein. The protein is Holo-[acyl-carrier-protein] synthase of Borreliella afzelii (strain PKo) (Borrelia afzelii).